Here is a 355-residue protein sequence, read N- to C-terminus: UDP-N-acetylglucosamine--N-acetylmuramyl-(pentapeptide) pyrophosphoryl-undecaprenol N-acetylglucosamine transferase (355 aa).

UDP-N-acetyl-alpha-D-glucosamine is bound by residues 15–17 (TGG), Asn-127, Arg-163, Ser-191, Ile-244, 263–268 (ALTVSE), and Gln-288.

It belongs to the glycosyltransferase 28 family. MurG subfamily.

The protein resides in the cell inner membrane. The enzyme catalyses di-trans,octa-cis-undecaprenyl diphospho-N-acetyl-alpha-D-muramoyl-L-alanyl-D-glutamyl-meso-2,6-diaminopimeloyl-D-alanyl-D-alanine + UDP-N-acetyl-alpha-D-glucosamine = di-trans,octa-cis-undecaprenyl diphospho-[N-acetyl-alpha-D-glucosaminyl-(1-&gt;4)]-N-acetyl-alpha-D-muramoyl-L-alanyl-D-glutamyl-meso-2,6-diaminopimeloyl-D-alanyl-D-alanine + UDP + H(+). The protein operates within cell wall biogenesis; peptidoglycan biosynthesis. Functionally, cell wall formation. Catalyzes the transfer of a GlcNAc subunit on undecaprenyl-pyrophosphoryl-MurNAc-pentapeptide (lipid intermediate I) to form undecaprenyl-pyrophosphoryl-MurNAc-(pentapeptide)GlcNAc (lipid intermediate II). This chain is UDP-N-acetylglucosamine--N-acetylmuramyl-(pentapeptide) pyrophosphoryl-undecaprenol N-acetylglucosamine transferase, found in Escherichia coli (strain 55989 / EAEC).